Consider the following 310-residue polypeptide: Keratin, type II cytoskeletal 8 (310 aa).

A disordered region spans residues 1–38 (QRTLKVSSSGPRSFSSRSFSSGPSSRISSSSYSRVGSN). Residue K5 forms a Glycyl lysine isopeptide (Lys-Gly) (interchain with G-Cter in SUMO2) linkage. S7, S9, S15, and S16 each carry phosphoserine. A compositionally biased stretch (low complexity) spans 7–38 (SSSGPRSFSSRSFSSGPSSRISSSSYSRVGSN). R17 is subject to Omega-N-methylarginine. Phosphoserine is present on residues S18, S21, and S25. Residue R26 is modified to Omega-N-methylarginine. S28, S31, and S33 each carry phosphoserine. R34 is subject to Omega-N-methylarginine. Phosphoserine is present on S37. R42 carries the post-translational modification Asymmetric dimethylarginine; alternate. The residue at position 42 (R42) is an Omega-N-methylarginine; alternate. Positions 92-127 (EKEQIKTLNNKFASFIDKVRFLEQQNKILETKWSFL) are coil 1A. Residues 92–310 (EKEQIKTLNN…LRHTKTEISE (219 aa)) form the IF rod domain. K102 is subject to N6-malonyllysine. Glycyl lysine isopeptide (Lys-Gly) (interchain with G-Cter in SUMO2) cross-links involve residues K123 and K131. Residues 128–144 (QQQKTSQSNLDGLFEKY) form a linker 1 region. A coil 1B region spans residues 145 to 236 (ITNLRRQLDS…HLYEEEIKEM (92 aa)). Residue K198 forms a Glycyl lysine isopeptide (Lys-Gly) (interchain with G-Cter in SUMO1); alternate linkage. K198 participates in a covalent cross-link: Glycyl lysine isopeptide (Lys-Gly) (interchain with G-Cter in SUMO2); alternate. K208 is modified (N6-acetyllysine). Y229 carries the phosphotyrosine modification. The interval 237-260 (QSQISDTSVVVSMDNSRSLDLDGI) is linker 12. Phosphoserine is present on residues S254 and S275. Positions 261 to 310 (IADVRAQYEEIANRSRAEAETMYQIKYEELQLLAGKHGDDLRHTKTEISE) are coil 2. Residue K286 forms a Glycyl lysine isopeptide (Lys-Gly) (interchain with G-Cter in SUMO2) linkage. Residue K296 forms a Glycyl lysine isopeptide (Lys-Gly) (interchain with G-Cter in SUMO2); alternate linkage. Position 296 is an N6-acetyllysine; alternate (K296). K305 participates in a covalent cross-link: Glycyl lysine isopeptide (Lys-Gly) (interchain with G-Cter in SUMO2).

It belongs to the intermediate filament family. As to quaternary structure, heterotetramer of two type I and two type II keratins. Forms a heterodimer with KRT18. Associates with KRT20. Interacts with PNN. When associated with KRT19, interacts with DMD. Interacts with APEX1. Interacts with GPER1. Interacts with EPPK1. Interacts with PKP1 and PKP2. O-glycosylated. O-GlcNAcylation at multiple sites increases solubility, and decreases stability by inducing proteasomal degradation. Post-translationally, O-glycosylated (O-GlcNAcylated), in a cell cycle-dependent manner.

It localises to the cytoplasm. Its subcellular location is the nucleus. The protein localises to the nucleoplasm. The protein resides in the nucleus matrix. Together with KRT19, helps to link the contractile apparatus to dystrophin at the costameres of striated muscle. The polypeptide is Keratin, type II cytoskeletal 8 (Potorous tridactylus (Potoroo)).